The following is a 411-amino-acid chain: Probable tRNA pseudouridine synthase D (411 aa).

Asp81 (nucleophile) is an active-site residue. Positions 154-375 constitute a TRUD domain; the sequence is GTPNFFGLQR…SGSYRPADTL (222 aa).

This sequence belongs to the pseudouridine synthase TruD family.

The catalysed reaction is uridine(13) in tRNA = pseudouridine(13) in tRNA. Functionally, could be responsible for synthesis of pseudouridine from uracil-13 in transfer RNAs. The polypeptide is Probable tRNA pseudouridine synthase D (Archaeoglobus fulgidus (strain ATCC 49558 / DSM 4304 / JCM 9628 / NBRC 100126 / VC-16)).